The primary structure comprises 361 residues: Chorismate synthase (361 aa).

Residues R48 and R54 each coordinate NADP(+). Residues 125-127 (RSS), 238-239 (NA), G278, 293-297 (KPTSS), and R319 each bind FMN.

It belongs to the chorismate synthase family. In terms of assembly, homotetramer. Requires FMNH2 as cofactor.

It catalyses the reaction 5-O-(1-carboxyvinyl)-3-phosphoshikimate = chorismate + phosphate. It participates in metabolic intermediate biosynthesis; chorismate biosynthesis; chorismate from D-erythrose 4-phosphate and phosphoenolpyruvate: step 7/7. Its function is as follows. Catalyzes the anti-1,4-elimination of the C-3 phosphate and the C-6 proR hydrogen from 5-enolpyruvylshikimate-3-phosphate (EPSP) to yield chorismate, which is the branch point compound that serves as the starting substrate for the three terminal pathways of aromatic amino acid biosynthesis. This reaction introduces a second double bond into the aromatic ring system. The sequence is that of Chorismate synthase from Shigella flexneri.